The chain runs to 310 residues: Fructose-bisphosphate aldolase/6-deoxy-5-ketofructose 1-phosphate synthase (310 aa).

Substrate is bound by residues 48 to 49, His-53, Asp-57, and Trp-180; that span reads DQ. The active-site Proton donor is Tyr-182. Substrate contacts are provided by residues Arg-184, 213–215, 241–243, and 270–271; these read KVN, AGG, and GR. Lys-213 (schiff-base intermediate with dihydroxyacetone-P) is an active-site residue. Lys-213 functions as the Schiff-base intermediate with substrate in the catalytic mechanism.

This sequence belongs to the DeoC/FbaB aldolase family.

It catalyses the reaction beta-D-fructose 1,6-bisphosphate = D-glyceraldehyde 3-phosphate + dihydroxyacetone phosphate. It carries out the reaction beta-D-fructose 1,6-bisphosphate + methylglyoxal = 1-deoxy-D-threo-hexo-2,5-diulose 6-phosphate + D-glyceraldehyde 3-phosphate. The catalysed reaction is beta-D-fructose 1-phosphate + methylglyoxal = 1-deoxy-D-threo-hexo-2,5-diulose 6-phosphate + D-glyceraldehyde. It functions in the pathway aromatic compound metabolism. Functionally, catalyzes the transaldolization of either fructose-1-P or fructose-1,6-bisphosphate with methylglyoxal to produce 6-deoxy-5-ketofructose-1-phosphate (DKFP). Also catalyzes the reversible aldol condensation of dihydroxyacetone phosphate (DHAP or glycerone-phosphate) with glyceraldehyde 3-phosphate (G3P or GAP) to produce fructose 1,6-bisphosphate (FBP). The sequence is that of Fructose-bisphosphate aldolase/6-deoxy-5-ketofructose 1-phosphate synthase from Methanocaldococcus jannaschii (strain ATCC 43067 / DSM 2661 / JAL-1 / JCM 10045 / NBRC 100440) (Methanococcus jannaschii).